The sequence spans 822 residues: Nose resistant to fluoxetine protein 6 (822 aa).

Positions 1–24 (MGNMRRLLIFAVLVILTVISNSKS) are cleaved as a signal peptide. N236 carries N-linked (GlcNAc...) asparagine glycosylation. 3 helical membrane-spanning segments follow: residues 306–326 (LAMF…FGTL), 617–637 (PYIR…LNAW), and 655–675 (IICW…LYWF).

The protein belongs to the acyltransferase 3 family. In L1 larvae through to adult, hyp3 and hyp5, the most anterior cells in the hypodermis, and in intestine. Other hypodermal cells show weaker expression.

The protein localises to the membrane. Functionally, plays a role in the uptake of a range of molecules including lipids and xenobiotic compounds from the intestine to surrounding tissues. Mediates transport of lipids from intestine to the reproductive tract. Required for efficient yolk transport into oocytes. Vital for embryonic development. This chain is Nose resistant to fluoxetine protein 6 (nrf-6), found in Caenorhabditis elegans.